The following is a 1363-amino-acid chain: ABC multidrug transporter MDR2 (1363 aa).

The helical transmembrane segment at Ile65 to Leu85 threads the bilayer. The ABC transmembrane type-1 1 domain maps to Val69 to Ser367. Residue Asn97 is glycosylated (N-linked (GlcNAc...) asparagine). Helical transmembrane passes span Val119 to Cys139, Lys193 to Leu213, Val215 to Gly235, Ile301 to Gly321, and Val336 to Ser356. In terms of domain architecture, ABC transporter 1 spans Ile403–Leu682. Gly438–Ser445 provides a ligand contact to ATP. Asn552 and Asn633 each carry an N-linked (GlcNAc...) asparagine glycan. The interval Tyr738 to Lys758 is disordered. The next 3 helical transmembrane spans lie at Leu781–Gly801, Gly820–Val840, and Leu896–Ile916. The 272-residue stretch at Leu781–Lys1052 folds into the ABC transmembrane type-1 2 domain. A glycan (N-linked (GlcNAc...) asparagine) is linked at Asn973. The next 2 helical transmembrane spans lie at Phe992–Gly1012 and Ile1016–Ser1036. An ABC transporter 2 domain is found at Val1119–His1358. Gly1154–Ser1161 serves as a coordination point for ATP.

This sequence belongs to the ABC transporter superfamily. ABCB family. Multidrug resistance exporter (TC 3.A.1.201) subfamily.

Its subcellular location is the cell membrane. In terms of biological role, pleiotropic ABC efflux transporter that may be involved in the modulation susceptibility to a wide range of unrelated cytotoxic compounds. This chain is ABC multidrug transporter MDR2, found in Trichophyton tonsurans (strain CBS 112818) (Scalp ringworm fungus).